We begin with the raw amino-acid sequence, 98 residues long: NADH-ubiquinone oxidoreductase chain 4L (98 aa).

The next 3 helical transmembrane spans lie at 1–21 (MAPINLNLILAFSLALLGVLI), 28–48 (STLLCLEGMMLSLFILMTLLI), and 59–79 (APLILLVFSACEAGVGLALLV).

This sequence belongs to the complex I subunit 4L family. Core subunit of respiratory chain NADH dehydrogenase (Complex I) which is composed of 45 different subunits.

It is found in the mitochondrion inner membrane. It catalyses the reaction a ubiquinone + NADH + 5 H(+)(in) = a ubiquinol + NAD(+) + 4 H(+)(out). Functionally, core subunit of the mitochondrial membrane respiratory chain NADH dehydrogenase (Complex I) which catalyzes electron transfer from NADH through the respiratory chain, using ubiquinone as an electron acceptor. Part of the enzyme membrane arm which is embedded in the lipid bilayer and involved in proton translocation. In Perameles gunnii (Eastern barred bandicoot), this protein is NADH-ubiquinone oxidoreductase chain 4L (MT-ND4L).